The primary structure comprises 223 residues: UPF0319 protein VPA1584 (223 aa).

Residues 1-21 (MKLIKPLTCALALAMSGMAFA) form the signal peptide.

This sequence belongs to the UPF0319 family.

This chain is UPF0319 protein VPA1584, found in Vibrio parahaemolyticus serotype O3:K6 (strain RIMD 2210633).